Reading from the N-terminus, the 160-residue chain is Ribosome maturation factor RimP (160 aa).

Belongs to the RimP family.

The protein localises to the cytoplasm. Required for maturation of 30S ribosomal subunits. The polypeptide is Ribosome maturation factor RimP (Orientia tsutsugamushi (strain Boryong) (Rickettsia tsutsugamushi)).